The primary structure comprises 400 residues: Elongation factor Tu (400 aa).

The 200-residue stretch at 10–209 folds into the tr-type G domain; the sequence is KPHVNIGTIG…EVDNYIPTPE (200 aa). Residues 19 to 26 form a G1 region; that stretch reads GHVDHGKT. GTP is bound at residue 19-26; the sequence is GHVDHGKT. Thr26 contributes to the Mg(2+) binding site. The segment at 60 to 64 is G2; sequence GITIN. The tract at residues 81–84 is G3; the sequence is DCPG. GTP-binding positions include 81–85 and 136–139; these read DCPGH and NKCD. The segment at 136-139 is G4; it reads NKCD. The tract at residues 174–176 is G5; that stretch reads SAL.

It belongs to the TRAFAC class translation factor GTPase superfamily. Classic translation factor GTPase family. EF-Tu/EF-1A subfamily. Monomer.

Its subcellular location is the cytoplasm. The catalysed reaction is GTP + H2O = GDP + phosphate + H(+). Functionally, GTP hydrolase that promotes the GTP-dependent binding of aminoacyl-tRNA to the A-site of ribosomes during protein biosynthesis. This is Elongation factor Tu from Ruminiclostridium cellulolyticum (strain ATCC 35319 / DSM 5812 / JCM 6584 / H10) (Clostridium cellulolyticum).